A 227-amino-acid polypeptide reads, in one-letter code: Atypical response regulator protein ChxR (227 aa).

Residues 6-108 enclose the Response regulatory domain; that stretch reads HVLLVSEHWD…ILKSAISLFL (103 aa). The segment at residues 117-213 is a DNA-binding region (ompR/PhoB-type); sequence PESIRFGPNV…LRGVGYLFSD (97 aa).

Homodimer.

In terms of biological role, may be a global positive regulator of transcription. Binds a cis-acting element of its own promoter DNA sequence and is hence probably also involved in its own transcription activation. The recognition sequence is 5'-WHGAWNH-N(3-5)-WHGAWNH-3', where W is A/T, H is C/A/T, N is G/C/A/T and the linker length in the middle is 3 to 5 nucleotides. This is Atypical response regulator protein ChxR from Chlamydia trachomatis serovar L2 (strain ATCC VR-902B / DSM 19102 / 434/Bu).